The following is a 106-amino-acid chain: Pyrimidine/purine nucleoside phosphorylase (106 aa).

Belongs to the nucleoside phosphorylase PpnP family.

It catalyses the reaction a purine D-ribonucleoside + phosphate = a purine nucleobase + alpha-D-ribose 1-phosphate. The catalysed reaction is adenosine + phosphate = alpha-D-ribose 1-phosphate + adenine. It carries out the reaction cytidine + phosphate = cytosine + alpha-D-ribose 1-phosphate. The enzyme catalyses guanosine + phosphate = alpha-D-ribose 1-phosphate + guanine. It catalyses the reaction inosine + phosphate = alpha-D-ribose 1-phosphate + hypoxanthine. The catalysed reaction is thymidine + phosphate = 2-deoxy-alpha-D-ribose 1-phosphate + thymine. It carries out the reaction uridine + phosphate = alpha-D-ribose 1-phosphate + uracil. The enzyme catalyses xanthosine + phosphate = alpha-D-ribose 1-phosphate + xanthine. Catalyzes the phosphorolysis of diverse nucleosides, yielding D-ribose 1-phosphate and the respective free bases. Can use uridine, adenosine, guanosine, cytidine, thymidine, inosine and xanthosine as substrates. Also catalyzes the reverse reactions. The polypeptide is Pyrimidine/purine nucleoside phosphorylase (Burkholderia vietnamiensis (strain G4 / LMG 22486) (Burkholderia cepacia (strain R1808))).